Consider the following 87-residue polypeptide: MTILSTITSISRPNKISKSFVSSNGGSSISMGSNSVACYNACGGGSSYSYSSSYSGSGLDYSYKANYSSSTGNNSYVVIASSTCNCN.

The protein belongs to the hssA/B family.

This is HssA/B-like protein 57 (hssl57) from Dictyostelium discoideum (Social amoeba).